We begin with the raw amino-acid sequence, 60 residues long: uncharacterized protein (60 aa).

The chain crosses the membrane as a helical span at residues S38–Y58.

The protein localises to the membrane. This is an uncharacterized protein from Saccharomyces cerevisiae (strain ATCC 204508 / S288c) (Baker's yeast).